A 373-amino-acid polypeptide reads, in one-letter code: XK-related protein 9 (373 aa).

8 helical membrane-spanning segments follow: residues 8-28 (FMMSVLGIIIYVTDLIVDIWV), 38-58 (YVFSALALSFMLFGTLVAQCF), 166-186 (AAIMVSCCAISWSTVDYQVAL), 203-223 (ITYLFYKLFTLLSWMLSVVLL), 224-244 (LFLNVKIALFLLLFLWLLGII), 256-276 (CISMEFLYRIVVGFILIFTFF), 295-315 (VLGTLGILTVFWVCPLNIFNP), and 318-338 (FIPISITIVLTLLLGILFLIV).

This sequence belongs to the XK family. Post-translationally, undergoes proteolytic processing by caspase-3 (CASP3), caspase-6 (CASP6) and caspase-7 (CASP7) to generate the XK-related protein 9, processed form, leading to its activation.

The protein localises to the cell membrane. The enzyme catalyses a 1,2-diacyl-sn-glycero-3-phospho-L-serine(in) = a 1,2-diacyl-sn-glycero-3-phospho-L-serine(out). Activated upon caspase cleavage to generate the XK-related protein 9, processed form. Does not act prior the onset of apoptosis. Phospholipid scramblase that promotes phosphatidylserine exposure on apoptotic cell surface. Phosphatidylserine is a specific marker only present at the surface of apoptotic cells and acts as a specific signal for engulfment. The protein is XK-related protein 9 of Pan troglodytes (Chimpanzee).